Consider the following 493-residue polypeptide: Putative BTB/POZ domain-containing protein L35 (493 aa).

One can recognise a BTB domain in the interval 16-87 (TDLKLTLVDD…YLVDNKSEVD (72 aa)).

Belongs to the mimivirus BTB/WD family.

This chain is Putative BTB/POZ domain-containing protein L35, found in Acanthamoeba polyphaga (Amoeba).